Here is a 34-residue protein sequence, read N- to C-terminus: Phallacidin proprotein 1 (34 aa).

Positions 1–10 are excised as a propeptide; it reads MSDINATRLP. The cyclopeptide (Ala-Pro) cross-link spans 11–17; the sequence is AWLVDCP. Positions 12–16 form a cross-link, 2'-cysteinyl-6'-hydroxytryptophan sulfoxide (Trp-Cys); that stretch reads WLVDC. Residues 18–34 constitute a propeptide that is removed on maturation; sequence CVGDDVNRLLTRGESLC.

Belongs to the MSDIN fungal toxin family. Processed by the macrocyclase-peptidase enzyme POPB to yield a toxic cyclic heptapeptide. POPB first removes 10 residues from the N-terminus. Conformational trapping of the remaining peptide forces the enzyme to release this intermediate rather than proceed to macrocyclization. The enzyme rebinds the remaining peptide in a different conformation and catalyzes macrocyclization of the N-terminal 7 residues.

Its function is as follows. Major toxin that belongs to the bicyclic heptapeptides called phallotoxins. Although structurally related to amatoxins, phallotoxins have a different mode of action, which is the stabilization of F-actin. Phallotoxins are poisonous when administered parenterally, but not orally because of poor absorption. This chain is Phallacidin proprotein 1, found in Amanita bisporigera (Destroying angel).